Reading from the N-terminus, the 273-residue chain is MAAVVPRFDDVYKNAQRRILDQETFFSRGLGRPLMKNTYLFDNYAYGWIPETAIWSSRYANLDASDYYPISLGLLKKFKFLMSLYKGPIPVYEEKVNTEFIANGSFSGRYVSYLRKFSALPTNEFISFLLLTSIPIYNILFWFKNTQFDITKHTLFRYVYTDNAKHLALARYMHQTGDYKPLFSRLKENYIFTGPVPIGIKDIDHPNLSRARSPSDYETLANISTILYFTKYDPVLMFLLFYVPGYSITTKITPAVEYLMDKLKLTKNDVQLL.

2 helical membrane-spanning segments follow: residues 123–143 (NEFI…LFWF) and 223–243 (ISTI…LFYV).

Belongs to the orthopoxvirus OPG070 family. Post-translationally, phosphorylated by OPG054 kinase in vitro.

It is found in the virion. Its subcellular location is the host endoplasmic reticulum membrane. It localises to the host cytoplasm. Its function is as follows. May play a role in the biogenesis of the viral factories by recruiting and wrapping DNA replication sites in endoplasmic reticulum derived membranes. Later in infection, phosphorylation by the late viral kinase OPG054 might decrease DNA-binding ability and trigger ER membranes disassembly. Binds DNA in vitro. This chain is Protein OPG070 (OPG070), found in Variola virus (isolate Human/India/Ind3/1967) (VARV).